A 223-amino-acid polypeptide reads, in one-letter code: Uracil-DNA glycosylase (223 aa).

Asp-64 (proton acceptor) is an active-site residue.

Belongs to the uracil-DNA glycosylase (UDG) superfamily. UNG family.

Its subcellular location is the cytoplasm. The enzyme catalyses Hydrolyzes single-stranded DNA or mismatched double-stranded DNA and polynucleotides, releasing free uracil.. Excises uracil residues from the DNA which can arise as a result of misincorporation of dUMP residues by DNA polymerase or due to deamination of cytosine. The chain is Uracil-DNA glycosylase from Desulfitobacterium hafniense (strain DSM 10664 / DCB-2).